The following is a 938-amino-acid chain: Protein NLP3 (938 aa).

2 disordered regions span residues 1 to 26 and 557 to 597; these read MEVDPSSSLPGAGEGGGGGIGGGGGD and LADD…KAEK. Over residues 12–26 the composition is skewed to gly residues; it reads AGEGGGGGIGGGGGD. Residues 580–597 show a composition bias toward basic and acidic residues; that stretch reads SLHKSNKPPERRRGKAEK. An RWP-RK domain is found at 585-666; it reads NKPPERRRGK…IESVQGSDAA (82 aa). A coiled-coil region spans residues 640–662; the sequence is SRKINKVNRSLSKLKQVIESVQG. A disordered region spans residues 743–769; that stretch reads DKASHSRSSSGEGSINSRTSEASCHGS. A compositionally biased stretch (low complexity) spans 748–762; the sequence is SRSSSGEGSINSRTS. In terms of domain architecture, PB1 spans 847 to 926; that stretch reads TVTIKASFKE…HVIRLLVSDV (80 aa).

The protein resides in the nucleus. In terms of biological role, probable transcription factor. In Oryza sativa subsp. japonica (Rice), this protein is Protein NLP3 (NLP3).